We begin with the raw amino-acid sequence, 391 residues long: Metal tolerance protein 7 (391 aa).

Positions 1 to 21 (MGSRGRRGGGERETETEEDET) are disordered. Residues 1–103 (MGSRGRRGGG…LRQMAKGERL (103 aa)) lie on the Cytoplasmic side of the membrane. The chain crosses the membrane as a helical span at residues 104–124 (AINLSNIINLILFIGKVLASV). Residues 125–134 (ESLSMAVIAS) lie on the Vacuolar side of the membrane. A helical membrane pass occupies residues 135 to 155 (TLDSLLDLLSGFILWFTAHAM). The Cytoplasmic portion of the chain corresponds to 156–171 (KKPNKYSYPIGKRRMQ). The helical transmembrane segment at 172-192 (PVGIIVFASVMGTLGFQVLIE) threads the bilayer. Residues 193–210 (SGRQLITNEHQVFDHRKE) lie on the Vacuolar side of the membrane. The helical transmembrane segment at 211–231 (LWMIGSMSSVAVVKFFLMLYC) threads the bilayer. Over 232–246 (RSFKNEIVRAYAQDH) the chain is Cytoplasmic. The helical transmembrane segment at 247 to 264 (FFDVITNSVGLVSALLAV) threads the bilayer. Topologically, residues 265 to 266 (RY) are vacuolar. A helical membrane pass occupies residues 267–287 (KWWMDPVGAILIAVYTITTWA). Topologically, residues 288 to 391 (RTVVENVGTL…THRPEHKAEV (104 aa)) are cytoplasmic.

Belongs to the cation diffusion facilitator (CDF) transporter (TC 2.A.4) family. SLC30A subfamily.

The protein resides in the vacuole membrane. Involved in sequestration of excess metal in the cytoplasm into vacuoles to maintain metal homeostasis. The polypeptide is Metal tolerance protein 7 (MTP7) (Oryza sativa subsp. japonica (Rice)).